The primary structure comprises 124 residues: Large ribosomal subunit protein uL18 (124 aa).

This sequence belongs to the universal ribosomal protein uL18 family. As to quaternary structure, part of the 50S ribosomal subunit; part of the 5S rRNA/L5/L18/L25 subcomplex. Contacts the 5S and 23S rRNAs.

Functionally, this is one of the proteins that bind and probably mediate the attachment of the 5S RNA into the large ribosomal subunit, where it forms part of the central protuberance. The protein is Large ribosomal subunit protein uL18 of Aquifex pyrophilus.